Reading from the N-terminus, the 503-residue chain is Potassium voltage-gated channel subfamily V member 1 (503 aa).

The Cytoplasmic portion of the chain corresponds to 1 to 213; sequence MELLPPRGRA…EKPGSCTAAR (213 aa). Residues 214–234 form a helical membrane-spanning segment; the sequence is IFGVISIIFVAVSIVNMALMS. At 235-246 the chain is on the extracellular side; that stretch reads AELSWLDPQLLE. Residues 247–267 form a helical membrane-spanning segment; sequence ILEYVCISWFTGEFVLRFLCV. Residues 268–279 are Cytoplasmic-facing; it reads RDRCRFLRKVPN. A helical transmembrane segment spans residues 280 to 300; it reads IIDLLAILPFYITLLVESLSG. Over 301-312 the chain is Extracellular; sequence SQTTQELENVGR. A helical; Voltage-sensor transmembrane segment spans residues 313–334; that stretch reads IVQVLRLLRALRMLKLGRHSTG. The Cytoplasmic portion of the chain corresponds to 335-348; that stretch reads LRSLGMTITQCYEE. Residues 349–369 form a helical membrane-spanning segment; it reads VGLLLLFLSVGISIFSTVEYF. Positions 395 to 400 match the Selectivity filter motif; the sequence is TVGYGD. Residues 410–430 traverse the membrane as a helical segment; it reads IVAFMCILSGILVLALPIAII. The Cytoplasmic segment spans residues 431 to 503; the sequence is NDRFSACYFT…RSSGGDDFWF (73 aa).

The protein belongs to the potassium channel family. V (TC 1.A.1.2) subfamily. Kv8.1/KCNV1 sub-subfamily. In terms of assembly, heteromultimer with KCNB1 and KCNB2. Interacts with KCNC4 and KCND1.

The protein localises to the cell membrane. Functionally, potassium channel subunit that does not form functional channels by itself. Modulates KCNB1 and KCNB2 channel activity by shifting the threshold for inactivation to more negative values and by slowing the rate of inactivation. Can down-regulate the channel activity of KCNB1, KCNB2, KCNC4 and KCND1, possibly by trapping them in intracellular membranes. In Bos taurus (Bovine), this protein is Potassium voltage-gated channel subfamily V member 1 (KCNV1).